The sequence spans 508 residues: Photosystem II CP47 reaction center protein (508 aa).

6 helical membrane passes run 21 to 36 (AVHLMHTALVSGWAGS), 101 to 115 (ITLSGLLFLSAIWHW), 140 to 156 (GIHLFLSGVLCFGFGAF), 203 to 218 (IAAGILGILAGLFHLS), 237 to 252 (VLSSSIAAVFFAAFVV), and 457 to 472 (TFALIFFFGHIWHGAR).

Belongs to the PsbB/PsbC family. PsbB subfamily. In terms of assembly, PSII is composed of 1 copy each of membrane proteins PsbA, PsbB, PsbC, PsbD, PsbE, PsbF, PsbH, PsbI, PsbJ, PsbK, PsbL, PsbM, PsbT, PsbX, PsbY, PsbZ, Psb30/Ycf12, at least 3 peripheral proteins of the oxygen-evolving complex and a large number of cofactors. It forms dimeric complexes. Binds multiple chlorophylls. PSII binds additional chlorophylls, carotenoids and specific lipids. serves as cofactor.

The protein resides in the plastid. It localises to the chloroplast thylakoid membrane. In terms of biological role, one of the components of the core complex of photosystem II (PSII). It binds chlorophyll and helps catalyze the primary light-induced photochemical processes of PSII. PSII is a light-driven water:plastoquinone oxidoreductase, using light energy to abstract electrons from H(2)O, generating O(2) and a proton gradient subsequently used for ATP formation. The sequence is that of Photosystem II CP47 reaction center protein from Psilotum nudum (Whisk fern).